Here is a 127-residue protein sequence, read N- to C-terminus: MSKPLKFLLWSSLALLLLQIGSGAICEGKSSEPAVRQTQVKWREGKKFRVEVMNKCPMCPIINLRLKCQGFPQSLVDPTFLRVLSSSAGNCVVNDGLPLSPMQTLSFNYSNTHQFALRPLSWSFQCE.

Residues 1-23 (MSKPLKFLLWSSLALLLLQIGSG) form the signal peptide.

This is an uncharacterized protein from Arabidopsis thaliana (Mouse-ear cress).